Here is a 77-residue protein sequence, read N- to C-terminus: Large ribosomal subunit protein eL20 (77 aa).

Belongs to the eukaryotic ribosomal protein eL20 family. In terms of assembly, part of the 50S ribosomal subunit. Binds 23S rRNA.

This Thermococcus kodakarensis (strain ATCC BAA-918 / JCM 12380 / KOD1) (Pyrococcus kodakaraensis (strain KOD1)) protein is Large ribosomal subunit protein eL20.